A 573-amino-acid polypeptide reads, in one-letter code: MADTLPPTDRSCDISQPLERLSPDEALKAGSEYLRGTIALGLLDRITSAVPGDDIKLMKFHGIYQQDDRDVRDERRRQKLEPAFQFMIRVRLPGGICTTERWLKISELACAHGNETLRMTTRQTFQFHWVLKHNIVPVIRGLHEVLLDTVAACGDDSRGVMATVNPQFPALQAELAALAKTVSDHVIPKTRGYHEIWYGEERIASSEPEEPFYGRTYMPRKFKIGFVIPPNNDIDIYAQDLGYIAIAGKDGKIAGFNIAIGGGMGRTDKVPHTYPRTASVIGFITPDRLISVTEAVMGVQRDYGNRADRSRARFKYTIDDKGLDWIKLAIEDRAGLLEPARPYHFTSNADIYGWVESDDGYHHFTLFVENGRLNRDTLDKIARIAHVHKGHFRLTPNQNLMIANVATADKPKIDALLVGSGLIAFNEHSVLRLNSMACVAFPTCGLAMADSERYLPTLITKIEGILTRYNLQDEPITLRMTGCPNGCSRPFIAEIGLTGRAPGKYNLYLGGGFHGQRLNRLYRENIGEAAILEALDEVLRHYATERLPDEHFGDFTIRAGIIREVTEGRFSND.

4 residues coordinate [4Fe-4S] cluster: C438, C444, C483, and C487. C487 provides a ligand contact to siroheme.

This sequence belongs to the nitrite and sulfite reductase 4Fe-4S domain family. In terms of assembly, alpha(8)-beta(8). The alpha component is a flavoprotein, the beta component is a hemoprotein. Siroheme is required as a cofactor. The cofactor is [4Fe-4S] cluster.

It catalyses the reaction hydrogen sulfide + 3 NADP(+) + 3 H2O = sulfite + 3 NADPH + 4 H(+). It participates in sulfur metabolism; hydrogen sulfide biosynthesis; hydrogen sulfide from sulfite (NADPH route): step 1/1. Functionally, component of the sulfite reductase complex that catalyzes the 6-electron reduction of sulfite to sulfide. This is one of several activities required for the biosynthesis of L-cysteine from sulfate. The polypeptide is Sulfite reductase [NADPH] hemoprotein beta-component (Nitrosomonas eutropha (strain DSM 101675 / C91 / Nm57)).